A 120-amino-acid chain; its full sequence is U13-lycotoxin-Ls1e (120 aa).

The first 16 residues, 1–16 (MKILFVLISILYAVYC), serve as a signal peptide directing secretion. Positions 17 to 54 (FSSEEDVDSAYLANELEPVEDINSEQYAALEPKEEQER) are excised as a propeptide. Cystine bridges form between Cys56/Cys70, Cys63/Cys76, Cys69/Cys87, and Cys78/Cys85. One can recognise an Agouti domain in the interval 56-95 (CAGMGRDCKDDCDCCLNIATCNCWFGRYFCSCTFGDYQTC).

It belongs to the neurotoxin 05 (agouti) family. Contains 6 disulfide bonds. In terms of tissue distribution, expressed by the venom gland.

It localises to the secreted. This chain is U13-lycotoxin-Ls1e, found in Lycosa singoriensis (Wolf spider).